Reading from the N-terminus, the 506-residue chain is 2,3-bisphosphoglycerate-independent phosphoglycerate mutase (506 aa).

Mn(2+)-binding residues include aspartate 13 and serine 63. The active-site Phosphoserine intermediate is serine 63. Residues histidine 124, 153 to 154, arginine 183, arginine 189, 254 to 257, and lysine 330 each bind substrate; these read RD and RADR. Residues aspartate 396, histidine 400, aspartate 437, histidine 438, and histidine 456 each coordinate Mn(2+).

It belongs to the BPG-independent phosphoglycerate mutase family. As to quaternary structure, monomer. Mn(2+) is required as a cofactor.

It catalyses the reaction (2R)-2-phosphoglycerate = (2R)-3-phosphoglycerate. It participates in carbohydrate degradation; glycolysis; pyruvate from D-glyceraldehyde 3-phosphate: step 3/5. Functionally, catalyzes the interconversion of 2-phosphoglycerate and 3-phosphoglycerate. The protein is 2,3-bisphosphoglycerate-independent phosphoglycerate mutase of Cereibacter sphaeroides (strain KD131 / KCTC 12085) (Rhodobacter sphaeroides).